The sequence spans 462 residues: MATETLELKTPQLADTVAVTEKDTETKKKDEVEKDEAMEEKGEEIDGEKVKSPVTPVSERPIRERKRTGRYVIDTPPRSSGNKPLSITQGRGTRLKEIPNVAYKLSKRKPDDNLFLLHTILYGKKAKAQMLKKNIGQFSGFVWSEQEEEKQRAKAKEKLDKCIKEKLIDFCDVLDIPVNKSTVKKEELAVRVLEFLVCPKATRDILLADSEKETKKRKKSTSKNVTSGESSHVPAKRRRQAKKQEQPTETEGNGESDVGSEGTNDSNGEDDVAPEEENNKSEDTETEDEKDKAKEKTKSTDKKRLSKRTKKEKPAAEEEKSIKGSAKSSRKSFRQVDKSTTSSSKKQKVDKDDSSKEKGKTQTSKPQAKGSKDQGQSRKKGKKEPTRKELHVVVTKILKEVDFNTATLSDILRKLGSHFGIDLMHRKAEVKDIITDAINEMSDDDDEKEEDTEDEGEKEGKD.

Disordered regions lie at residues 18-91 (AVTE…TQGR) and 212-390 (KETK…RKEL). Over residues 20 to 32 (TEKDTETKKKDEV) the composition is skewed to basic and acidic residues. Over residues 33–46 (EKDEAMEEKGEEID) the composition is skewed to acidic residues. Positions 77 to 91 (PRSSGNKPLSITQGR) are enriched in polar residues. A compositionally biased stretch (acidic residues) spans 267–276 (NGEDDVAPEE). Composition is skewed to basic and acidic residues over residues 277–303 (ENNK…TDKK), 312–322 (EKPAAEEEKSI), and 347–360 (QKVD…EKGK). A Nuclear localization signal motif is present at residues 344 to 351 (SKKQKVDK). The region spanning 384 to 439 (EPTRKELHVVVTKILKEVDFNTATLSDILRKLGSHFGIDLMHRKAEVKDIITDAIN) is the DEK-C domain. 2 DNA-binding regions span residues 402 to 416 (DFNT…RKLG) and 431 to 435 (KDIIT). The interval 438-462 (INEMSDDDDEKEEDTEDEGEKEGKD) is disordered. The span at 441–462 (MSDDDDEKEEDTEDEGEKEGKD) shows a compositional bias: acidic residues.

Found in a mRNA splicing-dependent exon junction complex (EJC). Binds specifically histones H3 and H4.

The protein localises to the nucleus. It localises to the nucleolus. Chromatin-associated protein which contributes to the modulation of chromatin structure (such as super-helical structure of DNA) and function. Binds to chromatin of protein-coding genes throughout the genome to regulate nucleosome occupancy and chromatin accessibility, and to modulate the expression of target genes. The protein is DEK domain-containing chromatin-associated protein 1 of Arabidopsis thaliana (Mouse-ear cress).